The chain runs to 354 residues: RNA 3'-terminal phosphate cyclase (354 aa).

Residues Gln100 and 290–293 (HMGD) contribute to the ATP site. His316 serves as the catalytic Tele-AMP-histidine intermediate.

Belongs to the RNA 3'-terminal cyclase family. Type 1 subfamily.

It is found in the cytoplasm. It catalyses the reaction a 3'-end 3'-phospho-ribonucleotide-RNA + ATP = a 3'-end 2',3'-cyclophospho-ribonucleotide-RNA + AMP + diphosphate. Functionally, catalyzes the conversion of 3'-phosphate to a 2',3'-cyclic phosphodiester at the end of RNA. The mechanism of action of the enzyme occurs in 3 steps: (A) adenylation of the enzyme by ATP; (B) transfer of adenylate to an RNA-N3'P to produce RNA-N3'PP5'A; (C) and attack of the adjacent 2'-hydroxyl on the 3'-phosphorus in the diester linkage to produce the cyclic end product. The biological role of this enzyme is unknown but it is likely to function in some aspects of cellular RNA processing. This is RNA 3'-terminal phosphate cyclase from Caldivirga maquilingensis (strain ATCC 700844 / DSM 13496 / JCM 10307 / IC-167).